The chain runs to 377 residues: Chaperone protein DnaJ (377 aa).

In terms of domain architecture, J spans 5 to 70 (DYYEILGVSK…EKRSAYDQYG (66 aa)). A CR-type zinc finger spans residues 131–209 (GVVREICVPT…CRGSGRIERT (79 aa)). Residues C144, C147, C161, C164, C183, C186, C197, and C200 each contribute to the Zn(2+) site. CXXCXGXG motif repeat units lie at residues 144–151 (CLQCRGSG), 161–168 (CVTCHGHG), 183–190 (CPSCNGHG), and 197–204 (CNKCRGSG).

This sequence belongs to the DnaJ family. In terms of assembly, homodimer. Zn(2+) serves as cofactor.

Its subcellular location is the cytoplasm. Its function is as follows. Participates actively in the response to hyperosmotic and heat shock by preventing the aggregation of stress-denatured proteins and by disaggregating proteins, also in an autonomous, DnaK-independent fashion. Unfolded proteins bind initially to DnaJ; upon interaction with the DnaJ-bound protein, DnaK hydrolyzes its bound ATP, resulting in the formation of a stable complex. GrpE releases ADP from DnaK; ATP binding to DnaK triggers the release of the substrate protein, thus completing the reaction cycle. Several rounds of ATP-dependent interactions between DnaJ, DnaK and GrpE are required for fully efficient folding. Also involved, together with DnaK and GrpE, in the DNA replication of plasmids through activation of initiation proteins. This is Chaperone protein DnaJ from Blochmanniella floridana.